Reading from the N-terminus, the 458-residue chain is Monomethylamine methyltransferase MtmB (458 aa).

A non-standard amino acid (pyrrolysine) is located at residue Pyl202.

This sequence belongs to the monomethylamine methyltransferase family. Can form a complex with MtmC.

It carries out the reaction Co(I)-[methylamine-specific corrinoid protein] + methylamine + H(+) = methyl-Co(III)-[methylamine-specific corrinoid protein] + NH4(+). Its pathway is one-carbon metabolism; methanogenesis from methylamine. Functionally, catalyzes the transfer of the methyl group from monomethylamine to the corrinoid cofactor of MtmC. This Methanosarcina mazei (strain ATCC BAA-159 / DSM 3647 / Goe1 / Go1 / JCM 11833 / OCM 88) (Methanosarcina frisia) protein is Monomethylamine methyltransferase MtmB (mtmB1).